Reading from the N-terminus, the 546-residue chain is Probable protein kinase UbiB (546 aa).

One can recognise a Protein kinase domain in the interval D124 to L502. Residues L130–V138 and K153 each bind ATP. The active-site Proton acceptor is D288. The next 2 helical transmembrane spans lie at Y501–P521 and E522–W542.

The protein belongs to the ABC1 family. UbiB subfamily.

Its subcellular location is the cell inner membrane. The protein operates within cofactor biosynthesis; ubiquinone biosynthesis [regulation]. Functionally, is probably a protein kinase regulator of UbiI activity which is involved in aerobic coenzyme Q (ubiquinone) biosynthesis. In Salmonella enteritidis PT4 (strain P125109), this protein is Probable protein kinase UbiB.